The chain runs to 364 residues: Putative F-box/kelch-repeat protein At1g12170 (364 aa).

Residues 1 to 50 (MMHVILPWELVEEILYRVPPLSLTRFKIVCKQWNTLFKSKSFVNNHLVRV) form the F-box domain. Kelch repeat units follow at residues 156 to 205 (SIYN…LNGN) and 328 to 364 (CVYI…IPVP).

The sequence is that of Putative F-box/kelch-repeat protein At1g12170 from Arabidopsis thaliana (Mouse-ear cress).